A 923-amino-acid polypeptide reads, in one-letter code: Alanine--tRNA ligase (923 aa).

4 residues coordinate Zn(2+): histidine 614, histidine 618, cysteine 717, and histidine 721. Residues 884–903 are disordered; sequence KVGGGGGGPPDFAQGGGPDA. Over residues 885–901 the composition is skewed to gly residues; sequence VGGGGGGPPDFAQGGGP.

This sequence belongs to the class-II aminoacyl-tRNA synthetase family. Requires Zn(2+) as cofactor.

It is found in the cytoplasm. The enzyme catalyses tRNA(Ala) + L-alanine + ATP = L-alanyl-tRNA(Ala) + AMP + diphosphate. In terms of biological role, catalyzes the attachment of alanine to tRNA(Ala) in a two-step reaction: alanine is first activated by ATP to form Ala-AMP and then transferred to the acceptor end of tRNA(Ala). Also edits incorrectly charged Ser-tRNA(Ala) and Gly-tRNA(Ala) via its editing domain. This Haloquadratum walsbyi (strain DSM 16790 / HBSQ001) protein is Alanine--tRNA ligase.